We begin with the raw amino-acid sequence, 744 residues long: Glucosamine inositolphosphorylceramide transferase 1 (744 aa).

Helical transmembrane passes span Phe31–Val51, Ser378–Val398, and Leu460–Leu480. Residues Asn534, Asn558 to Arg563, Asp579 to Asp581, Arg609, and Phe665 to Asp669 contribute to the substrate site. Residue Asp581 participates in Mn(2+) binding. A disulfide bridge connects residues Cys667 and Cys718. Residue Asp669 is part of the active site.

Belongs to the glycosyltransferase 64 family. The cofactor is Mn(2+). In terms of tissue distribution, highly expressed in almost all tissues.

It is found in the membrane. The protein operates within sphingolipid metabolism. Essential protein. Glycosyltransferase that mediates the glycosylation of glycosylinositol phosphorylceramides (GIPCs), the major sphingolipids in the plasma membrane; acts as a HexN(Ac)-specific GIPC sugar transferase. Responsible for the glycosylation of a subgroup of GIPCs found in seeds and pollen that contain GlcNAc and GlcN (GlcN(Ac)). Maybe involved in the maintenance of cell-cell adhesion. In Oryza sativa subsp. japonica (Rice), this protein is Glucosamine inositolphosphorylceramide transferase 1.